The chain runs to 223 residues: Adenylate kinase (223 aa).

10 to 15 is an ATP binding site; it reads GSGKGT. Positions 30 to 59 are NMP; sequence ESGAIFREHIGGGTELGKKAKAYIDRGDLV. AMP-binding positions include Ser31, Arg36, 57 to 59, 84 to 87, and Gln91; these read DLV and GFPR. An LID region spans residues 125-164; sequence GRRLCKNNNNHPNNIFIEAIKPNGDVCRVCGGTLSSRSDD. Arg126 contacts ATP. Residues Arg161 and Arg173 each contribute to the AMP site. An ATP-binding site is contributed by Gly209.

It belongs to the adenylate kinase family. In terms of assembly, monomer.

Its subcellular location is the cytoplasm. The catalysed reaction is AMP + ATP = 2 ADP. Its pathway is purine metabolism; AMP biosynthesis via salvage pathway; AMP from ADP: step 1/1. Catalyzes the reversible transfer of the terminal phosphate group between ATP and AMP. Plays an important role in cellular energy homeostasis and in adenine nucleotide metabolism. This Desulfovibrio desulfuricans (strain ATCC 27774 / DSM 6949 / MB) protein is Adenylate kinase.